A 143-amino-acid chain; its full sequence is Regulator of ribonuclease activity B (143 aa).

The segment covering 117 to 135 has biased composition (acidic residues); it reads DPDAEYDDEDGENEDDESE. The disordered stretch occupies residues 117–143; sequence DPDAEYDDEDGENEDDESESDKSSRLH.

This sequence belongs to the RraB family. As to quaternary structure, interacts with the C-terminal region of Rne.

The protein resides in the cytoplasm. In terms of biological role, globally modulates RNA abundance by binding to RNase E (Rne) and regulating its endonucleolytic activity. Can modulate Rne action in a substrate-dependent manner by altering the composition of the degradosome. The polypeptide is Regulator of ribonuclease activity B (Proteus mirabilis (strain HI4320)).